A 193-amino-acid polypeptide reads, in one-letter code: MLLSDRDILAAQADGHISLDPWTPEMVQPASIDVRLDRFFRLFNNHAYTYVDPAENQGELTEQFEVKPDEPWILHPGEFALGSTWEYVKLDASIAARLEGKSSLGRLGILTHSTAGFIDPGFEGHITLELSNVSTLPVKLWPGMKIGQMCFFQLSSPAEHPYGSATTGSHYQGQRGPTPSRSYVNFYKADITD.

DCTP is bound by residues 101–106 (KSSLGR), D119, 127–129 (TLE), Q148, Y162, and Q174. Catalysis depends on E129, which acts as the Proton donor/acceptor.

This sequence belongs to the dCTP deaminase family. In terms of assembly, homotrimer.

The enzyme catalyses dCTP + 2 H2O = dUMP + NH4(+) + diphosphate. Its pathway is pyrimidine metabolism; dUMP biosynthesis; dUMP from dCTP: step 1/1. Bifunctional enzyme that catalyzes both the deamination of dCTP to dUTP and the hydrolysis of dUTP to dUMP without releasing the toxic dUTP intermediate. The chain is dCTP deaminase, dUMP-forming from Bifidobacterium adolescentis (strain ATCC 15703 / DSM 20083 / NCTC 11814 / E194a).